Reading from the N-terminus, the 269-residue chain is MQAYLDLIDKILREGVRKPDRTGTGTLSIFGYQMRFDLGAGFPLVTTKKLHWKSIVHELIWFLRGDTNIGYLKDNGVGIWDEWADDSGDLGPVYGRQWRSWQAPDGRTIDQIANVIDEIQRDPFSRRLLVSAWNPADLPAMALAPCHCLFQFNVRDDSTGTRRLDLQLYQRSGDAFLGAPFNIASYALLTELVASVCGLTPGDFVHTFGDAHLYLNHIDQAKLQLSRDPRPLPRLRINGNVKSLFDIRFEDLSLENYDPHPVIKAPVAV.

Arg-21 serves as a coordination point for dUMP. His-51 provides a ligand contact to (6R)-5,10-methylene-5,6,7,8-tetrahydrofolate. 126 to 127 (RR) contacts dUMP. The active-site Nucleophile is Cys-146. DUMP contacts are provided by residues 171–174 (RSGD), Asn-182, and 212–214 (HLY). A (6R)-5,10-methylene-5,6,7,8-tetrahydrofolate-binding site is contributed by Asp-174. Ala-268 serves as a coordination point for (6R)-5,10-methylene-5,6,7,8-tetrahydrofolate.

Belongs to the thymidylate synthase family. Bacterial-type ThyA subfamily. Homodimer.

The protein localises to the cytoplasm. The enzyme catalyses dUMP + (6R)-5,10-methylene-5,6,7,8-tetrahydrofolate = 7,8-dihydrofolate + dTMP. The protein operates within pyrimidine metabolism; dTTP biosynthesis. Catalyzes the reductive methylation of 2'-deoxyuridine-5'-monophosphate (dUMP) to 2'-deoxythymidine-5'-monophosphate (dTMP) while utilizing 5,10-methylenetetrahydrofolate (mTHF) as the methyl donor and reductant in the reaction, yielding dihydrofolate (DHF) as a by-product. This enzymatic reaction provides an intracellular de novo source of dTMP, an essential precursor for DNA biosynthesis. The polypeptide is Thymidylate synthase (Methylocella silvestris (strain DSM 15510 / CIP 108128 / LMG 27833 / NCIMB 13906 / BL2)).